Here is a 266-residue protein sequence, read N- to C-terminus: Undecaprenyl-diphosphatase (266 aa).

The next 7 membrane-spanning stretches (helical) occupy residues 38–58 (SDMF…IIYW), 80–100 (LIVA…VLHF), 108–128 (PIAW…WAAA), 136–156 (ITWL…IFPG), 176–196 (AAAT…ASGY), 217–237 (IAFV…LAYI), and 245–265 (FAVY…TGLI).

It belongs to the UppP family.

The protein localises to the cell inner membrane. It carries out the reaction di-trans,octa-cis-undecaprenyl diphosphate + H2O = di-trans,octa-cis-undecaprenyl phosphate + phosphate + H(+). Functionally, catalyzes the dephosphorylation of undecaprenyl diphosphate (UPP). Confers resistance to bacitracin. The polypeptide is Undecaprenyl-diphosphatase (Rhizobium leguminosarum bv. trifolii (strain WSM2304)).